A 95-amino-acid chain; its full sequence is Small ribosomal subunit protein bS18 (95 aa).

Belongs to the bacterial ribosomal protein bS18 family. In terms of assembly, part of the 30S ribosomal subunit. Forms a tight heterodimer with protein bS6.

Binds as a heterodimer with protein bS6 to the central domain of the 16S rRNA, where it helps stabilize the platform of the 30S subunit. The protein is Small ribosomal subunit protein bS18 of Rickettsia akari (strain Hartford).